Here is a 644-residue protein sequence, read N- to C-terminus: MNQMQSYADVHPPHMSAATAHAPASAAPSGISHYAYPPQSSMMQPGQHQYGPTPPGYPSYGYSNGVPSGLPASSSMNNAMVPSTLQLPAMSSSGPSPSLSGAQSYAPHSFDHTGQVAPPGMKPRVTATLWEDEGSLCFQVEAKGVCVARREDNHMINGTKLLNVAGMTRGRRDGILKSEKTRHVVKIGPMHLKGVWIPFERALEFANKEKITEQLYPLFVHDIGALLYHPSNQTRASVGSAAMAAVDRRRPDSMQTQRYISGPTTSQPPSLHHHHSMSNPIGAPMSQAPHALQPHPSAGRPGLDRAHTFPTPPTSASSIMGMSNSGSSYEWSGANVQTPQGSQPLSIDTGLSNTRSVPTTPATTPPGAVQQAISYGSNQSYDNSRPMYSGPPSQPGQYNTQGQSMMGYRPDSGYTKTEMAPPSRLADVSEEGDVKHSEGMMPQGNSQVVAPAPGPEGDHEHDNEYTHSTASYNGSRGPYGYASNGNAGGLHPEHPHMSPEMNGSPHQNGSGRATPRTTTTSQTQWNSGYPTPQRQGPPSSNLYNVMSDPRGAPNGNAPHDAYPGPGAVPQYASQGYPPANGNAKRGRDDDDEDPYRPDSVQSDDMGGLKRRKTMEGGAVGGAYAQDPTPGLQRAHTMTAQRARR.

Residues Ala-18–His-33 are compositionally biased toward low complexity. Disordered regions lie at residues Ala-18–Pro-58 and Gln-86–Gly-120. The span at Pro-38–Gln-47 shows a compositional bias: polar residues. Low complexity predominate over residues Leu-87 to Ser-104. The 107-residue stretch at Arg-124 to Pro-230 folds into the HTH APSES-type domain. Positions Gly-158–Glu-179 form a DNA-binding region, H-T-H motif. The tract at residues Gly-239 to Arg-644 is disordered. The segment covering Ser-253 to Pro-269 has biased composition (polar residues). The span at Ser-315–Ser-328 shows a compositional bias: low complexity. Composition is skewed to polar residues over residues Ala-334 to Val-357, Gln-371 to Asn-383, and Pro-395 to Ser-404. The segment covering Glu-456 to Tyr-465 has biased composition (basic and acidic residues). Low complexity predominate over residues Gly-509–Gln-524. Positions Trp-525–Asn-544 are enriched in polar residues. Residues Lys-584–Lys-612 form a nuclear localization domain region. A compositionally biased stretch (polar residues) spans His-635–Arg-644.

It belongs to the EFG1/PHD1/stuA family.

Its subcellular location is the nucleus. Transcription factor that regulates asexual reproduction. Binds the StuA-response elements (StRE) with the consensus sequence 5'-(A/T)CGCG(T/A)N(A/C)-3' at the promoters of target genes. Required for pathogenicity and positively regulates the synthesis of the mycotoxin alternariol. Acts as a positive regulator of Tox3 but is not required for the expression of ToxA. Also acts as a central regulator of carbon metabolism including glycolysis, the TCA cycle, and amino acid synthesis. The polypeptide is Cell pattern formation-associated protein StuA (Phaeosphaeria nodorum (strain SN15 / ATCC MYA-4574 / FGSC 10173) (Glume blotch fungus)).